A 135-amino-acid polypeptide reads, in one-letter code: Single-stranded DNA-binding protein RIM1, mitochondrial (135 aa).

The transit peptide at 1–17 directs the protein to the mitochondrion; sequence MFLRTQARFFHATTKKM. In terms of domain architecture, SSB spans 19 to 117; the sequence is FSKMSIVGRI…LVQKDINLLK (99 aa).

Homotetramer. Interacts with PIF1.

The protein resides in the mitochondrion. Functionally, this protein binds preferentially and cooperatively to single-stranded DNA (ssDNS). Involved in mitochondrial DNA replication. Stimulates PIF1 helicase activity. The chain is Single-stranded DNA-binding protein RIM1, mitochondrial (RIM1) from Saccharomyces cerevisiae (strain ATCC 204508 / S288c) (Baker's yeast).